A 245-amino-acid polypeptide reads, in one-letter code: uncharacterized protein (245 aa).

The signal sequence occupies residues 1 to 20 (MIKQTIVALLLSVGASSVFA).

It to E.coli YmcB.

This is an uncharacterized protein from Escherichia coli (strain K12).